Consider the following 460-residue polypeptide: 1-aminocyclopropane-1-carboxylate synthase 11 (460 aa).

Substrate is bound by residues Glu-45 and Tyr-83. Lys-267 bears the N6-(pyridoxal phosphate)lysine mark.

The protein belongs to the class-I pyridoxal-phosphate-dependent aminotransferase family. As to quaternary structure, homodimer and heterodimer. In vivo, the relevance of heterodimerization with other ACS enzymes is however unsure. Interacts with GRF3. The cofactor is pyridoxal 5'-phosphate. Post-translationally, may be processed at its C-terminus. Expressed in roots.

The catalysed reaction is S-adenosyl-L-methionine = 1-aminocyclopropane-1-carboxylate + S-methyl-5'-thioadenosine + H(+). The protein operates within alkene biosynthesis; ethylene biosynthesis via S-adenosyl-L-methionine; ethylene from S-adenosyl-L-methionine: step 1/2. Functionally, 1-aminocyclopropane-1-carboxylate synthase (ACS) enzymes catalyze the conversion of S-adenosyl-L-methionine (SAM) into 1-aminocyclopropane-1-carboxylate (ACC), a direct precursor of ethylene. In Arabidopsis thaliana (Mouse-ear cress), this protein is 1-aminocyclopropane-1-carboxylate synthase 11 (ACS11).